The chain runs to 278 residues: Chitosanase (278 aa).

Residues 1-40 form the signal peptide; the sequence is MHSQHRTARIALAVVLTAIPASLATAGVGYASTQASTAVK. The Proton donor role is filled by E62. The Nucleophile role is filled by D80.

Belongs to the glycosyl hydrolase 46 family.

It localises to the secreted. The enzyme catalyses Endohydrolysis of beta-(1-&gt;4)-linkages between D-glucosamine residues in a partly acetylated chitosan.. Functionally, aids in the defense against invading fungal pathogens by degrading their cell wall chitosan. The polypeptide is Chitosanase (csn) (Streptomyces sp. (strain N174)).